A 61-amino-acid chain; its full sequence is Putative antitoxin VapB13 (61 aa).

The protein belongs to the UPF0165 family.

In terms of biological role, possibly the antitoxin component of a type II toxin-antitoxin (TA) system. Its cognate toxin is VapC13 (Potential). In Archaeoglobus fulgidus (strain ATCC 49558 / DSM 4304 / JCM 9628 / NBRC 100126 / VC-16), this protein is Putative antitoxin VapB13 (vapB13).